Consider the following 415-residue polypeptide: Squalene synthase 1 (415 aa).

The next 2 helical transmembrane spans lie at Ala-281–Phe-301 and Leu-391–Leu-411.

The protein belongs to the phytoene/squalene synthase family. Mg(2+) is required as a cofactor. Requires Mn(2+) as cofactor. In terms of tissue distribution, mostly expressed in the shoot apex (buds) and roots, and, to a lower extent, in stems, leaves, flowers and seeds.

It is found in the endoplasmic reticulum membrane. The catalysed reaction is 2 (2E,6E)-farnesyl diphosphate + NADH + H(+) = squalene + 2 diphosphate + NAD(+). It catalyses the reaction 2 (2E,6E)-farnesyl diphosphate + NADPH + H(+) = squalene + 2 diphosphate + NADP(+). Its pathway is terpene metabolism; lanosterol biosynthesis; lanosterol from farnesyl diphosphate: step 1/3. Component of the triterpene saponins (e.g. ginsenosides or panaxosides) and phytosterols biosynthetic pathways. Catalyzes the biosynthesis of squalene. The polypeptide is Squalene synthase 1 (Panax ginseng (Korean ginseng)).